A 171-amino-acid polypeptide reads, in one-letter code: Ribosome maturation factor RimM (171 aa).

A PRC barrel domain is found at 97 to 170 (EGEYYYHEII…LVTIHVMEGL (74 aa)).

It belongs to the RimM family. As to quaternary structure, binds ribosomal protein uS19.

Its subcellular location is the cytoplasm. In terms of biological role, an accessory protein needed during the final step in the assembly of 30S ribosomal subunit, possibly for assembly of the head region. Essential for efficient processing of 16S rRNA. May be needed both before and after RbfA during the maturation of 16S rRNA. It has affinity for free ribosomal 30S subunits but not for 70S ribosomes. The chain is Ribosome maturation factor RimM from Bacillus cereus (strain ZK / E33L).